The chain runs to 547 residues: Cilia- and flagella- associated protein 210 (547 aa).

Coiled-coil stretches lie at residues 50–131 (ERIR…RKKA), 183–251 (VKLN…MKKN), and 342–405 (IARD…KADK). A disordered region spans residues 214-237 (KQIEEHKEEEEARKKSEEKDAEEM).

Microtubule inner protein component of sperm flagellar doublet microtubules.

The protein resides in the cytoplasm. Its subcellular location is the cytoskeleton. It localises to the cilium axoneme. It is found in the flagellum axoneme. Functionally, microtubule inner protein (MIP) part of the dynein-decorated doublet microtubules (DMTs) in cilia axoneme, which is required for motile cilia beating. The chain is Cilia- and flagella- associated protein 210 (Cfap210) from Mus musculus (Mouse).